The chain runs to 240 residues: Putative glycyl-radical enzyme activating enzyme MJ1227 (240 aa).

In terms of domain architecture, Radical SAM core spans 14 to 232 (IDYPKKASAV…KKYIDNVVIR (219 aa)). Cysteine 29, cysteine 33, and cysteine 36 together coordinate [4Fe-4S] cluster. S-adenosyl-L-methionine is bound by residues 35-37 (YCH), glycine 71, and 126-128 (FDK).

The protein belongs to the organic radical-activating enzymes family. It depends on [4Fe-4S] cluster as a cofactor.

It carries out the reaction glycyl-[protein] + reduced [flavodoxin] + S-adenosyl-L-methionine = glycin-2-yl radical-[protein] + semiquinone [flavodoxin] + 5'-deoxyadenosine + L-methionine + H(+). The protein is Putative glycyl-radical enzyme activating enzyme MJ1227 of Methanocaldococcus jannaschii (strain ATCC 43067 / DSM 2661 / JAL-1 / JCM 10045 / NBRC 100440) (Methanococcus jannaschii).